The primary structure comprises 171 residues: Small ribosomal subunit protein uS4 (171 aa).

An S4 RNA-binding domain is found at 104–168 (RRLQTIVYKK…SPFKERAEEA (65 aa)).

The protein belongs to the universal ribosomal protein uS4 family. In terms of assembly, part of the 30S ribosomal subunit. Contacts protein S5. The interaction surface between S4 and S5 is involved in control of translational fidelity.

One of the primary rRNA binding proteins, it binds directly to 16S rRNA where it nucleates assembly of the body of the 30S subunit. Its function is as follows. With S5 and S12 plays an important role in translational accuracy. This Aeropyrum pernix (strain ATCC 700893 / DSM 11879 / JCM 9820 / NBRC 100138 / K1) protein is Small ribosomal subunit protein uS4.